The chain runs to 353 residues: Uroporphyrinogen decarboxylase (353 aa).

Substrate-binding positions include 30–34 (RQAGR), aspartate 79, tyrosine 154, serine 209, and histidine 332.

Belongs to the uroporphyrinogen decarboxylase family. Homodimer.

It localises to the cytoplasm. The catalysed reaction is uroporphyrinogen III + 4 H(+) = coproporphyrinogen III + 4 CO2. The protein operates within porphyrin-containing compound metabolism; protoporphyrin-IX biosynthesis; coproporphyrinogen-III from 5-aminolevulinate: step 4/4. Catalyzes the decarboxylation of four acetate groups of uroporphyrinogen-III to yield coproporphyrinogen-III. This is Uroporphyrinogen decarboxylase from Mycobacterium marinum (strain ATCC BAA-535 / M).